Consider the following 413-residue polypeptide: Aspartate kinase (413 aa).

ACT domains lie at 267–341 (LTIR…GDTK) and 347–413 (IVGV…RQGE).

This sequence belongs to the aspartokinase family. In terms of assembly, homotrimer. In the presence of inhibitory amino acids the Stokes radius of the protein increases, suggesting its oligomeric state may change.

The protein resides in the cytoplasm. It carries out the reaction L-aspartate + ATP = 4-phospho-L-aspartate + ADP. The protein operates within amino-acid biosynthesis; L-lysine biosynthesis via DAP pathway; (S)-tetrahydrodipicolinate from L-aspartate: step 1/4. Its pathway is amino-acid biosynthesis; L-methionine biosynthesis via de novo pathway; L-homoserine from L-aspartate: step 1/3. It participates in amino-acid biosynthesis; L-threonine biosynthesis; L-threonine from L-aspartate: step 1/5. Activated by L-lysine, L-methionine, and L-isoleucine. L-threonine, at low concentrations, is a mild activator and has a weak inhibitory effect only at concentrations over 10 mM. Strongly feedback inhibited by the concerted combination of L-lysine and L-threonine and slightly feedback inhibited by the concerted combination of L-threonine and L-methionine. Activated by the combination of L-methionine and L-lysine, L-methionine and L-isoleucine and L-lysine and L-isoleucine. Involved in the biosynthesis of L-aspartate-beta-semialdehyde which is a central intermediate in the biosynthesis of different amino acids (L-lysine, L-methionine, L-threonine). Catalyzes the phosphorylation of the beta-carboxyl group of L-aspartate to yield 4-phospho-L-aspartate. The protein is Aspartate kinase of Pseudomonas fluorescens (strain SBW25).